The sequence spans 502 residues: ATP synthase subunit alpha (502 aa).

169–176 provides a ligand contact to ATP; sequence GDRQTGKT.

It belongs to the ATPase alpha/beta chains family. F-type ATPases have 2 components, CF(1) - the catalytic core - and CF(0) - the membrane proton channel. CF(1) has five subunits: alpha(3), beta(3), gamma(1), delta(1), epsilon(1). CF(0) has three main subunits: a(1), b(2) and c(9-12). The alpha and beta chains form an alternating ring which encloses part of the gamma chain. CF(1) is attached to CF(0) by a central stalk formed by the gamma and epsilon chains, while a peripheral stalk is formed by the delta and b chains.

It localises to the cell inner membrane. The catalysed reaction is ATP + H2O + 4 H(+)(in) = ADP + phosphate + 5 H(+)(out). In terms of biological role, produces ATP from ADP in the presence of a proton gradient across the membrane. The alpha chain is a regulatory subunit. The sequence is that of ATP synthase subunit alpha from Geobacter sp. (strain M21).